Reading from the N-terminus, the 234-residue chain is Superoxide dismutase [Mn], mitochondrial (234 aa).

The transit peptide at 1 to 34 (MFSIRSSSRVLLKASSATTRATLNAAASKTFTRS) directs the protein to the mitochondrion. Mn(2+) contacts are provided by histidine 60, histidine 108, aspartate 198, and histidine 202.

It belongs to the iron/manganese superoxide dismutase family. In terms of assembly, homotetramer. Requires Mn(2+) as cofactor.

The protein resides in the mitochondrion matrix. The enzyme catalyses 2 superoxide + 2 H(+) = H2O2 + O2. Its function is as follows. Destroys superoxide anion radicals which are normally produced within the cells and which are toxic to biological systems. This is Superoxide dismutase [Mn], mitochondrial (SOD2) from Candida albicans (Yeast).